A 29-amino-acid polypeptide reads, in one-letter code: GLPVCGESCFGGTCNTPGCSCTWPVCTRD.

The segment at residues 1–29 (GLPVCGESCFGGTCNTPGCSCTWPVCTRD) is a cross-link (cyclopeptide (Gly-Asp)). 3 cysteine pairs are disulfide-bonded: C5-C19, C9-C21, and C14-C26.

This is a cyclic peptide.

Its function is as follows. Probably participates in a plant defense mechanism. In Psychotria brachyceras, this protein is Cyclotide psyleio D.